The chain runs to 205 residues: Holliday junction branch migration complex subunit RuvA (205 aa).

A domain I region spans residues 1–64 (MIGKLKGLID…EDQIKLFGFR (64 aa)). Residues 65 to 143 (SDLEREWFRL…GFASVDPAVA (79 aa)) are domain II. The tract at residues 144–153 (HLSGAIEERS) is flexible linker. The segment at 153–205 (SAPRPVADAISALVNLGYGQPQAAAAIAAAARSAGDAAQTAQLIKLGLKELSK) is domain III.

Belongs to the RuvA family. Homotetramer. Forms an RuvA(8)-RuvB(12)-Holliday junction (HJ) complex. HJ DNA is sandwiched between 2 RuvA tetramers; dsDNA enters through RuvA and exits via RuvB. An RuvB hexamer assembles on each DNA strand where it exits the tetramer. Each RuvB hexamer is contacted by two RuvA subunits (via domain III) on 2 adjacent RuvB subunits; this complex drives branch migration. In the full resolvosome a probable DNA-RuvA(4)-RuvB(12)-RuvC(2) complex forms which resolves the HJ.

It is found in the cytoplasm. Functionally, the RuvA-RuvB-RuvC complex processes Holliday junction (HJ) DNA during genetic recombination and DNA repair, while the RuvA-RuvB complex plays an important role in the rescue of blocked DNA replication forks via replication fork reversal (RFR). RuvA specifically binds to HJ cruciform DNA, conferring on it an open structure. The RuvB hexamer acts as an ATP-dependent pump, pulling dsDNA into and through the RuvAB complex. HJ branch migration allows RuvC to scan DNA until it finds its consensus sequence, where it cleaves and resolves the cruciform DNA. The sequence is that of Holliday junction branch migration complex subunit RuvA from Rhodopseudomonas palustris (strain BisA53).